The sequence spans 642 residues: Epithelial sodium channel subunit alpha (642 aa).

Residues 1–81 lie on the Cytoplasmic side of the membrane; the sequence is MHQVVTVKAE…VCSKRNKMKT (81 aa). The helical transmembrane segment at 82–102 threads the bilayer; it reads AFWSVLFFLTFGLMYWQFGIL. Over 103–553 the chain is Extracellular; sequence YREYFSFPVN…NQWSLWFGSS (451 aa). 10 disulfide bridges follow: Cys-130–Cys-297, Cys-222–Cys-229, Cys-274–Cys-281, Cys-385–Cys-470, Cys-407–Cys-447, Cys-407–Cys-466, Cys-411–Cys-462, Cys-420–Cys-447, Cys-420–Cys-470, and Cys-422–Cys-436. The disordered stretch occupies residues 170-209; sequence GAAQSSQKRSQRSLSHHVQRHPLRRRKRNEPVSLKGNSPP. A compositionally biased stretch (basic residues) spans 178 to 197; it reads RSQRSLSHHVQRHPLRRRKR. The helical transmembrane segment at 554 to 574 threads the bilayer; sequence VLSVVELAELILDFIAITIIL. The Cytoplasmic portion of the chain corresponds to 575-642; the sequence is SFKRFRSRQV…RDGEAVIGLE (68 aa). The segment at 587-608 is disordered; the sequence is PSVPPPGAHDNTAFQSEPADPS.

This sequence belongs to the amiloride-sensitive sodium channel (TC 1.A.6) family. SCNN1A subfamily. Heterotrimer; disulfide-linked and containing an alpha/SCNN1A, a beta/SCNN1B and a gamma/SCNN1G subunit.

The protein resides in the apical cell membrane. Its subcellular location is the cell projection. The protein localises to the cilium. It localises to the cytoplasmic granule. It is found in the cytoplasm. The protein resides in the cytoplasmic vesicle. Its subcellular location is the secretory vesicle. The protein localises to the acrosome. It localises to the flagellum. The enzyme catalyses Na(+)(in) = Na(+)(out). Originally identified and characterized by its inhibition by the diuretic drug amiloride. This is one of the three pore-forming subunits of the heterotrimeric epithelial sodium channel (ENaC), a critical regulator of sodium balance and fluid homeostasis. ENaC operates in epithelial tissues, where it mediates the electrodiffusion of sodium ions from extracellular fluid through the apical membrane of cells, with water following osmotically. The chain is Epithelial sodium channel subunit alpha from Pelodiscus sinensis (Chinese softshell turtle).